The following is a 248-amino-acid chain: tRNA (guanine-N(1)-)-methyltransferase (248 aa).

Residues glycine 113 and 133 to 138 (VGDYVL) contribute to the S-adenosyl-L-methionine site.

It belongs to the RNA methyltransferase TrmD family. In terms of assembly, homodimer.

It is found in the cytoplasm. The catalysed reaction is guanosine(37) in tRNA + S-adenosyl-L-methionine = N(1)-methylguanosine(37) in tRNA + S-adenosyl-L-homocysteine + H(+). Functionally, specifically methylates guanosine-37 in various tRNAs. The sequence is that of tRNA (guanine-N(1)-)-methyltransferase from Shewanella sp. (strain W3-18-1).